The chain runs to 216 residues: uncharacterized protein (216 aa).

In terms of domain architecture, N-acetyltransferase spans 1-216; the sequence is MVVKIVEAYE…DVTFLKLKLK (216 aa).

Belongs to the acetyltransferase family.

This is an uncharacterized protein from Dictyostelium discoideum (Social amoeba).